The chain runs to 599 residues: Laccase-2 (599 aa).

An N-terminal signal peptide occupies residues M1–A19. 2 consecutive Plastocyanin-like domains span residues V21–Y145 and V157–E307. 4 residues coordinate Cu cation: H82, H84, H127, and H129. C103 and C588 are disulfide-bonded. N-linked (GlcNAc...) asparagine glycans are attached at residues N207, N208, N231, N397, and N443. The Plastocyanin-like 3 domain occupies D450–A567. 7 residues coordinate Cu cation: H497, H500, H502, H549, C550, H551, and H555.

The protein belongs to the multicopper oxidase family. Homodimer. Cu cation serves as cofactor. In terms of tissue distribution, in mycelia, at a lower level than LCC4.

The protein localises to the secreted. It catalyses the reaction 4 hydroquinone + O2 = 4 benzosemiquinone + 2 H2O. Functionally, lignin degradation and detoxification of lignin-derived products. The polypeptide is Laccase-2 (LCC2) (Thanatephorus cucumeris (Black scurf of potato)).